The following is a 214-amino-acid chain: tRNA (guanine-N(7)-)-methyltransferase (214 aa).

4 residues coordinate S-adenosyl-L-methionine: Glu-43, Glu-68, Asp-95, and Asp-117. Asp-117 is a catalytic residue. Substrate-binding positions include Lys-121, Asp-153, and 190 to 193; that span reads TEYE.

It belongs to the class I-like SAM-binding methyltransferase superfamily. TrmB family.

It catalyses the reaction guanosine(46) in tRNA + S-adenosyl-L-methionine = N(7)-methylguanosine(46) in tRNA + S-adenosyl-L-homocysteine. Its pathway is tRNA modification; N(7)-methylguanine-tRNA biosynthesis. Functionally, catalyzes the formation of N(7)-methylguanine at position 46 (m7G46) in tRNA. The protein is tRNA (guanine-N(7)-)-methyltransferase of Staphylococcus aureus (strain USA300).